We begin with the raw amino-acid sequence, 421 residues long: MDRVLSRADKERLLELLKLPRQLWGDFGRMQQAYKQQSLLLHPDKGGSHALMQELNSLWGTFKTEVYNLRMNLGGTGFQVRRLHADGWNLSTKDTFGDRYYQRFCRMPLTCLVNVKYSSCSCILCLLRKQHRELKDKCDARCLVLGECFCLECYMQWFGTPTRDVLNLYADFIASMPIDWLDLDVHSVYNPRTRSEELRRAATVHYTMTTGHSAMEASTSQGNGMISSESGTPAISRRLRLPSLLSNPTYSVMRSHSFPPTRVLQQIHPHILLEDDETLVLLSPMTAYPRTPPELLYPESDQDQLEPLEEEEEEYMPMEDLYLDILPEEQVPQLIPPPIIPRAGLSPWEGLILRDLQRAHFDPILEASQRMRATHRAALRAHSMQRHLRRLGRTLLLVTFLAALLGICLMLFILIKRSRHF.

At 1–394 (MDRVLSRADK…QRHLRRLGRT (394 aa)) the chain is on the cytoplasmic side. One can recognise a J domain in the interval 12 to 75 (RLLELLKLPR…VYNLRMNLGG (64 aa)). At tyrosine 250 the chain carries Phosphotyrosine; by host. Serine 257 is subject to Phosphoserine; by host. 2 positions are modified to phosphotyrosine; by host: tyrosine 315 and tyrosine 322. Residues 395–415 (LLLVTFLAALLGICLMLFILI) form a helical membrane-spanning segment. Residues 416-421 (KRSRHF) are Extracellular-facing.

In terms of assembly, interacts with host Ppp2/PP2A A and C subunits; this interaction alters Ppp2/PP2A substrate specificity and localization. Interacts with host Src, Yes1, and Fyn. Interacts with host Shc1, Plcg1 and p85; these interactions lead to cell cycle progression. Interacts with host 14-3-3 proteins. In terms of processing, tyrosine-phosphorylated on three residues 250, 315 and 322, providing docking sites for host Shc1, p85, and Plcg1, respectively.

It localises to the host membrane. In terms of biological role, plays a role in transformation by modulating the activities of cellular proteins involved in control of cell proliferation and by acting as a functional homolog of an activated tyrosine kinase-associated growth-factor receptor. Recruits upon association with host Ppp2/PP2A the Src tyrosine kinase components Src, Yes and Fyn, thereby activating their kinase activity. Activation of Shc1, Pclg1 and p85 mediate signal transduction pathways leading to cell cycle progression and cell division. MT also plays a role in regulation of early and late gene expression and in viral DNA replication. This is Middle T antigen from Mus musculus (Mouse).